A 72-amino-acid polypeptide reads, in one-letter code: Translation initiation factor IF-1 (72 aa).

The region spanning 1–72 is the S1-like domain; sequence MAKEDTIQMQ…TRARIVFRAR (72 aa).

This sequence belongs to the IF-1 family. As to quaternary structure, component of the 30S ribosomal translation pre-initiation complex which assembles on the 30S ribosome in the order IF-2 and IF-3, IF-1 and N-formylmethionyl-tRNA(fMet); mRNA recruitment can occur at any time during PIC assembly.

The protein resides in the cytoplasm. In terms of biological role, one of the essential components for the initiation of protein synthesis. Stabilizes the binding of IF-2 and IF-3 on the 30S subunit to which N-formylmethionyl-tRNA(fMet) subsequently binds. Helps modulate mRNA selection, yielding the 30S pre-initiation complex (PIC). Upon addition of the 50S ribosomal subunit IF-1, IF-2 and IF-3 are released leaving the mature 70S translation initiation complex. The protein is Translation initiation factor IF-1 of Neisseria gonorrhoeae (strain ATCC 700825 / FA 1090).